The chain runs to 211 residues: ATP phosphoribosyltransferase (211 aa).

It belongs to the ATP phosphoribosyltransferase family. Short subfamily. Heteromultimer composed of HisG and HisZ subunits.

It is found in the cytoplasm. It carries out the reaction 1-(5-phospho-beta-D-ribosyl)-ATP + diphosphate = 5-phospho-alpha-D-ribose 1-diphosphate + ATP. The protein operates within amino-acid biosynthesis; L-histidine biosynthesis; L-histidine from 5-phospho-alpha-D-ribose 1-diphosphate: step 1/9. In terms of biological role, catalyzes the condensation of ATP and 5-phosphoribose 1-diphosphate to form N'-(5'-phosphoribosyl)-ATP (PR-ATP). Has a crucial role in the pathway because the rate of histidine biosynthesis seems to be controlled primarily by regulation of HisG enzymatic activity. This chain is ATP phosphoribosyltransferase, found in Bacillus cereus (strain 03BB102).